The following is a 337-amino-acid chain: Probable sulfurtransferase (337 aa).

Gly-83 provides a ligand contact to ATP. The [4Fe-4S] cluster site is built by Cys-172 and Cys-175. Lys-179 and Gly-206 together coordinate ATP. Cys-284 lines the [4Fe-4S] cluster pocket.

The protein belongs to the TtcA family. Requires [4Fe-4S] cluster as cofactor. Mg(2+) is required as a cofactor.

This Methanocaldococcus jannaschii (strain ATCC 43067 / DSM 2661 / JAL-1 / JCM 10045 / NBRC 100440) (Methanococcus jannaschii) protein is Probable sulfurtransferase.